Consider the following 145-residue polypeptide: Brain and acute leukemia cytoplasmic protein (145 aa).

Residue Gly2 is the site of N-myristoyl glycine attachment. A lipid anchor (S-palmitoyl cysteine) is attached at Cys3. The interaction with CAMK2A stretch occupies residues Cys3–Ala35. A disordered region spans residues Trp27–Lys120. The segment covering Cys83–Arg106 has biased composition (polar residues). The span at Thr108–Ala119 shows a compositional bias: basic and acidic residues.

In terms of assembly, interacts with CAMK2A. Post-translationally, palmitoylation and myristoylation target the protein to the lipid rafts. Expressed in the brain.

The protein localises to the cytoplasm. It localises to the synapse. The protein resides in the synaptosome. Its subcellular location is the membrane raft. It is found in the postsynaptic density. In terms of biological role, may play a synaptic role at the postsynaptic lipid rafts possibly through interaction with CAMK2A. This Sus scrofa (Pig) protein is Brain and acute leukemia cytoplasmic protein (BAALC).